The chain runs to 143 residues: Transcriptional regulator MraZ (143 aa).

2 consecutive SpoVT-AbrB domains span residues 5-47 and 76-119; these read EYQH…PQDE and AAEL…STEK.

This sequence belongs to the MraZ family. In terms of assembly, forms oligomers.

Its subcellular location is the cytoplasm. The protein localises to the nucleoid. This chain is Transcriptional regulator MraZ, found in Syntrophomonas wolfei subsp. wolfei (strain DSM 2245B / Goettingen).